Consider the following 111-residue polypeptide: Flagellar hook-basal body complex protein FliE (111 aa).

Belongs to the FliE family.

Its subcellular location is the bacterial flagellum basal body. The chain is Flagellar hook-basal body complex protein FliE from Brucella abortus (strain S19).